We begin with the raw amino-acid sequence, 128 residues long: NADH-ubiquinone oxidoreductase chain 3 (128 aa).

3 helical membrane passes run 3–23, 52–72, and 84–104; these read TIYTYLAPIVAMVLVVLNYLI, VAFILVAILFLPFDLEMSSIL, and YGLSILVIFLLSLVIAFVYEI.

It belongs to the complex I subunit 3 family.

It is found in the mitochondrion membrane. The catalysed reaction is a ubiquinone + NADH + 5 H(+)(in) = a ubiquinol + NAD(+) + 4 H(+)(out). Functionally, core subunit of the mitochondrial membrane respiratory chain NADH dehydrogenase (Complex I) that is believed to belong to the minimal assembly required for catalysis. Complex I functions in the transfer of electrons from NADH to the respiratory chain. The immediate electron acceptor for the enzyme is believed to be ubiquinone. In Debaryomyces hansenii (strain ATCC 36239 / CBS 767 / BCRC 21394 / JCM 1990 / NBRC 0083 / IGC 2968) (Yeast), this protein is NADH-ubiquinone oxidoreductase chain 3 (ND3).